A 1892-amino-acid polypeptide reads, in one-letter code: Protein TIC 214 (1892 aa).

6 helical membrane-spanning segments follow: residues 12 to 32, 68 to 88, 89 to 109, 128 to 148, 176 to 196, and 225 to 245; these read LISL…YYGF, FIAG…HLAL, GKPH…FFWN, LSIQ…HFIL, VGWL…LVWI, and IFSI…PSPI. The span at 256-266 shows a compositional bias: acidic residues; sequence PEEVGESEEER. The tract at residues 256-299 is disordered; sequence PEEVGESEEERNIEIETISEGGGANQKQGTEENTSSSLFSEEEV. The span at 280-294 shows a compositional bias: polar residues; sequence NQKQGTEENTSSSLF. The chain crosses the membrane as a helical span at residues 1115–1135; that stretch reads FYFFINFFIEKIYMDILLYII. Positions 1613–1636 are disordered; it reads SNQEKDVEEDYDKSDKKKRRKKKQ.

The protein belongs to the TIC214 family. In terms of assembly, part of the Tic complex.

It localises to the plastid. The protein localises to the chloroplast inner membrane. In terms of biological role, involved in protein precursor import into chloroplasts. May be part of an intermediate translocation complex acting as a protein-conducting channel at the inner envelope. This Gossypium hirsutum (Upland cotton) protein is Protein TIC 214.